The chain runs to 516 residues: Myocyte-specific enhancer factor 2A homolog (516 aa).

Residues 1–100 (MGRKKIQITR…KGLNGCESPD (100 aa)) form an interaction with hdac9 region. Positions 3–57 (RKKIQITRIMDERNRQVTFTKRKFGLMKKAYELSVLCDCEIALIIFNSSNKLFQY) constitute an MADS-box domain. The segment at residues 58–86 (ASTDMDKVLLKYTEYNEPHESRTNSDIVE) is a DNA-binding region (mef2-type). The interval 318 to 339 (PSSKGMMPPLNTQRVTSSQGTQ) is disordered. Residues 327 to 339 (LNTQRVTSSQGTQ) are compositionally biased toward polar residues. A Phosphothreonine; by NLK modification is found at threonine 343. Serine 386 is modified (phosphoserine; by NLK). Positions 420–433 (GSNLSINTNQNINI) are enriched in polar residues. Residues 420 to 516 (GSNLSINTNQ…KRMRMDAWVT (97 aa)) form a disordered region. A compositionally biased stretch (low complexity) spans 465-475 (DSLSSSSSSYD). Basic and acidic residues-rich tracts occupy residues 476 to 486 (GSDREDVRNDF) and 497 to 516 (NNEDRDSPSVKRMRMDAWVT).

This sequence belongs to the MEF2 family. As to quaternary structure, interacts with hdac9 and nlk2. As to expression, restricted to the somitic mesoderm of early embryos. Expressed in the head region of neurula stage embryos and in body muscle (myotomes) of the tadpole. Expressed in all tissues examined in the adult.

It localises to the nucleus. May regulate muscle-specific transcription in the embryo and may regulate transcription of a variety of cell types in the adult. Binds to the sequence 5'-CTA[TA]4TAR-3'. Acts downstream of nlk2 in anterior neural development, including eye formation. The polypeptide is Myocyte-specific enhancer factor 2A homolog (mef2a) (Xenopus laevis (African clawed frog)).